The chain runs to 100 residues: Urease subunit gamma (100 aa).

It belongs to the urease gamma subunit family. As to quaternary structure, heterotrimer of UreA (gamma), UreB (beta) and UreC (alpha) subunits. Three heterotrimers associate to form the active enzyme.

The protein resides in the cytoplasm. The enzyme catalyses urea + 2 H2O + H(+) = hydrogencarbonate + 2 NH4(+). It participates in nitrogen metabolism; urea degradation; CO(2) and NH(3) from urea (urease route): step 1/1. This is Urease subunit gamma from Rhodopseudomonas palustris (strain BisB18).